A 297-amino-acid chain; its full sequence is Tumor necrosis factor receptor superfamily member 27 (297 aa).

The Extracellular portion of the chain corresponds to 1 to 138 (MDCQENEYWD…TPTVPPQEAT (138 aa)). 3 TNFR-Cys repeats span residues 2-41 (DCQENEYWDQWGRCVTCQRCGPGQELSKDCGYGEGGDAYC), 43-83 (ACPP…NAVC), and 85-118 (DCLPRFYRKTRIGGLQDQECIPCTKQTPTSEVQC). 8 cysteine pairs are disulfide-bonded: C3–C15, C18–C31, C21–C41, C44–C58, C61–C75, C64–C83, C86–C104, and C107–C118. The N-linked (GlcNAc...) asparagine glycan is linked to N74. A helical; Signal-anchor for type III membrane protein transmembrane segment spans residues 139–159 (LVALVSSLLVVFTLAFLGLFF). Over 160–297 (LYCKQFFNRH…LNVPFEVPSP (138 aa)) the chain is Cytoplasmic. Residues 272–281 (ETLGGNTVES) show a composition bias toward polar residues. The segment at 272–297 (ETLGGNTVESTGDRLELNVPFEVPSP) is disordered.

Associates with TRAF1, TRAF3 and TRAF6.

It localises to the membrane. Functionally, receptor for EDA isoform A2, but not for EDA isoform A1. Mediates the activation of the NF-kappa-B and JNK pathways. Activation seems to be mediated by binding to TRAF3 and TRAF6. The protein is Tumor necrosis factor receptor superfamily member 27 (EDA2R) of Homo sapiens (Human).